Reading from the N-terminus, the 356-residue chain is Glycerol-1-phosphate dehydrogenase [NAD(P)+] (356 aa).

NAD(+)-binding positions include 103-107 and 125-128; these read GRSID and TAAS. Aspartate 130 contacts substrate. Serine 134 serves as a coordination point for NAD(+). Aspartate 177 provides a ligand contact to substrate. Zn(2+) contacts are provided by aspartate 177 and histidine 257. Histidine 261 serves as a coordination point for substrate. A Zn(2+)-binding site is contributed by histidine 273.

Belongs to the glycerol-1-phosphate dehydrogenase family. Zn(2+) is required as a cofactor.

It localises to the cytoplasm. It carries out the reaction sn-glycerol 1-phosphate + NAD(+) = dihydroxyacetone phosphate + NADH + H(+). It catalyses the reaction sn-glycerol 1-phosphate + NADP(+) = dihydroxyacetone phosphate + NADPH + H(+). It functions in the pathway membrane lipid metabolism; glycerophospholipid metabolism. Its function is as follows. Catalyzes the NAD(P)H-dependent reduction of dihydroxyacetonephosphate (DHAP or glycerone phosphate) to glycerol 1-phosphate (G1P). The G1P thus generated is used as the glycerophosphate backbone of phospholipids in the cellular membranes of Archaea. This is Glycerol-1-phosphate dehydrogenase [NAD(P)+] from Methanosarcina barkeri (strain Fusaro / DSM 804).